The following is a 122-amino-acid chain: Large ribosomal subunit protein uL18 (122 aa).

Positions 1-21 (MSKLSRKQQTQKRHRRLRRHL) are enriched in basic residues. A disordered region spans residues 1–26 (MSKLSRKQQTQKRHRRLRRHLTGTSD).

Belongs to the universal ribosomal protein uL18 family. In terms of assembly, part of the 50S ribosomal subunit; part of the 5S rRNA/L5/L18/L25 subcomplex. Contacts the 5S and 23S rRNAs.

In terms of biological role, this is one of the proteins that bind and probably mediate the attachment of the 5S RNA into the large ribosomal subunit, where it forms part of the central protuberance. In Parasynechococcus marenigrum (strain WH8102), this protein is Large ribosomal subunit protein uL18.